The following is a 233-amino-acid chain: Large ribosomal subunit protein uL1 (233 aa).

Belongs to the universal ribosomal protein uL1 family. Part of the 50S ribosomal subunit.

In terms of biological role, binds directly to 23S rRNA. The L1 stalk is quite mobile in the ribosome, and is involved in E site tRNA release. Functionally, protein L1 is also a translational repressor protein, it controls the translation of the L11 operon by binding to its mRNA. This is Large ribosomal subunit protein uL1 from Paracoccus denitrificans (strain Pd 1222).